Here is a 118-residue protein sequence, read N- to C-terminus: Large ribosomal subunit protein uL24 (118 aa).

Belongs to the universal ribosomal protein uL24 family. As to quaternary structure, part of the 50S ribosomal subunit.

Its function is as follows. One of two assembly initiator proteins, it binds directly to the 5'-end of the 23S rRNA, where it nucleates assembly of the 50S subunit. In terms of biological role, one of the proteins that surrounds the polypeptide exit tunnel on the outside of the subunit. The sequence is that of Large ribosomal subunit protein uL24 from Parasynechococcus marenigrum (strain WH8102).